The following is a 231-amino-acid chain: Octanoyltransferase (231 aa).

The BPL/LPL catalytic domain maps to 49–231 (SEAAEQVWLL…KRTFSEVFGS (183 aa)). Residues 87-94 (RGGQITYH), 162-164 (AIG), and 175-177 (GVS) contribute to the substrate site. Cys193 (acyl-thioester intermediate) is an active-site residue.

This sequence belongs to the LipB family.

Its subcellular location is the cytoplasm. It catalyses the reaction octanoyl-[ACP] + L-lysyl-[protein] = N(6)-octanoyl-L-lysyl-[protein] + holo-[ACP] + H(+). It participates in protein modification; protein lipoylation via endogenous pathway; protein N(6)-(lipoyl)lysine from octanoyl-[acyl-carrier-protein]: step 1/2. Functionally, catalyzes the transfer of endogenously produced octanoic acid from octanoyl-acyl-carrier-protein onto the lipoyl domains of lipoate-dependent enzymes. Lipoyl-ACP can also act as a substrate although octanoyl-ACP is likely to be the physiological substrate. The sequence is that of Octanoyltransferase from Nitrobacter winogradskyi (strain ATCC 25391 / DSM 10237 / CIP 104748 / NCIMB 11846 / Nb-255).